The sequence spans 312 residues: tRNA dimethylallyltransferase (312 aa).

Residue 14–21 (GPTASGKS) coordinates ATP. Residue 16–21 (TASGKS) participates in substrate binding. 2 interaction with substrate tRNA regions span residues 39–42 (DSSL) and 163–167 (QRLQR).

The protein belongs to the IPP transferase family. Monomer. Mg(2+) is required as a cofactor.

The enzyme catalyses adenosine(37) in tRNA + dimethylallyl diphosphate = N(6)-dimethylallyladenosine(37) in tRNA + diphosphate. Its function is as follows. Catalyzes the transfer of a dimethylallyl group onto the adenine at position 37 in tRNAs that read codons beginning with uridine, leading to the formation of N6-(dimethylallyl)adenosine (i(6)A). The protein is tRNA dimethylallyltransferase of Methylococcus capsulatus (strain ATCC 33009 / NCIMB 11132 / Bath).